The chain runs to 121 residues: Small ribosomal subunit protein uS13 (121 aa).

Residues 90 to 121 are disordered; that stretch reads RHRRGLPTRGQNTKNNARTRKGPTKTVAGKKK. Over residues 106-121 the composition is skewed to basic residues; that stretch reads ARTRKGPTKTVAGKKK.

The protein belongs to the universal ribosomal protein uS13 family. In terms of assembly, part of the 30S ribosomal subunit. Forms a loose heterodimer with protein S19. Forms two bridges to the 50S subunit in the 70S ribosome.

Functionally, located at the top of the head of the 30S subunit, it contacts several helices of the 16S rRNA. In the 70S ribosome it contacts the 23S rRNA (bridge B1a) and protein L5 of the 50S subunit (bridge B1b), connecting the 2 subunits; these bridges are implicated in subunit movement. Contacts the tRNAs in the A and P-sites. In Enterococcus faecalis (strain ATCC 700802 / V583), this protein is Small ribosomal subunit protein uS13.